The following is a 401-amino-acid chain: Lipid-A-disaccharide synthase (401 aa).

This sequence belongs to the LpxB family.

It carries out the reaction a lipid X + a UDP-2-N,3-O-bis[(3R)-3-hydroxyacyl]-alpha-D-glucosamine = a lipid A disaccharide + UDP + H(+). It participates in bacterial outer membrane biogenesis; LPS lipid A biosynthesis. Its function is as follows. Condensation of UDP-2,3-diacylglucosamine and 2,3-diacylglucosamine-1-phosphate to form lipid A disaccharide, a precursor of lipid A, a phosphorylated glycolipid that anchors the lipopolysaccharide to the outer membrane of the cell. The polypeptide is Lipid-A-disaccharide synthase (Rhodospirillum centenum (strain ATCC 51521 / SW)).